Here is a 1361-residue protein sequence, read N- to C-terminus: DNA-directed RNA polymerase subunit beta'' (1361 aa).

Residues C224, C295, C302, and C305 each coordinate Zn(2+).

It belongs to the RNA polymerase beta' chain family. RpoC2 subfamily. As to quaternary structure, in plastids the minimal PEP RNA polymerase catalytic core is composed of four subunits: alpha, beta, beta', and beta''. When a (nuclear-encoded) sigma factor is associated with the core the holoenzyme is formed, which can initiate transcription. It depends on Zn(2+) as a cofactor.

It localises to the plastid. The protein resides in the chloroplast. The catalysed reaction is RNA(n) + a ribonucleoside 5'-triphosphate = RNA(n+1) + diphosphate. Functionally, DNA-dependent RNA polymerase catalyzes the transcription of DNA into RNA using the four ribonucleoside triphosphates as substrates. This chain is DNA-directed RNA polymerase subunit beta'', found in Spinacia oleracea (Spinach).